A 549-amino-acid polypeptide reads, in one-letter code: FMRFamide receptor (549 aa).

At 1–117 the chain is on the extracellular side; sequence MSGTAVARLL…NNRIEFWVCG (117 aa). 3 N-linked (GlcNAc...) asparagine glycosylation sites follow: N59, N70, and N93. The helical transmembrane segment at 118 to 138 threads the bilayer; it reads VLINIVGVLGILGNIISMIIL. Topologically, residues 139-158 are cytoplasmic; it reads SRPQMRSSINYLLTGLARCD. The chain crosses the membrane as a helical span at residues 159 to 179; it reads TVLIITSILLFGIPSIYPYTG. Over 180 to 181 the chain is Extracellular; the sequence is HF. A helical transmembrane segment spans residues 182 to 202; it reads FGYYNYVYPFISPAVFPIGMI. At 203-238 the chain is on the cytoplasmic side; the sequence is AQTASIYMTFTVTLERYVAVCHPLKARALCTYGRAK. A helical transmembrane segment spans residues 239-259; the sequence is IYFIVCVCFSLAYNMPRFWEV. The Extracellular segment spans residues 260–289; the sequence is LTVTYPEPGKDVILHCVRPSRLRRSETYIN. The chain crosses the membrane as a helical span at residues 290–310; that stretch reads IYIHWCYLIVNYIIPFLTLAI. The Cytoplasmic portion of the chain corresponds to 311–341; sequence LNCLIYRQVKRANRERQRLSRSEKREIGLAT. A helical membrane pass occupies residues 342 to 362; it reads MLLCVVIVFFMLNFLPLVLNI. Topologically, residues 363–376 are extracellular; it reads SEAFYSTIDHKITK. The helical transmembrane segment at 377–397 threads the bilayer; sequence ISNLLITINSSVNFLIYIIFG. Over 398–549 the chain is Cytoplasmic; that stretch reads EKFKRIFLLI…KKLGHVSSGF (152 aa).

It belongs to the G-protein coupled receptor 1 family. Expressed in ovaries, heads and bodies. Expressed in dopaminergic neurons.

The protein resides in the cell membrane. A receptor for the FMRFamide peptides. Reacts with high affinity to FMRFamide and intrinsic FMRFamide-related peptides. By stimulating intracellular calcium signaling through the inositol 1,4,5-trisphosphate receptor, Itpr, in dopaminergic neurons, may be involved in the maintenance of neuronal excitability and in the regulation of flight bout duration. This chain is FMRFamide receptor, found in Drosophila melanogaster (Fruit fly).